A 217-amino-acid polypeptide reads, in one-letter code: GTP cyclohydrolase 1 (217 aa).

Zn(2+) contacts are provided by cysteine 109, histidine 112, and cysteine 180.

Belongs to the GTP cyclohydrolase I family. Toroid-shaped homodecamer, composed of two pentamers of five dimers.

The catalysed reaction is GTP + H2O = 7,8-dihydroneopterin 3'-triphosphate + formate + H(+). It functions in the pathway cofactor biosynthesis; 7,8-dihydroneopterin triphosphate biosynthesis; 7,8-dihydroneopterin triphosphate from GTP: step 1/1. The protein is GTP cyclohydrolase 1 of Vibrio campbellii (strain ATCC BAA-1116).